The sequence spans 269 residues: Phosphate import ATP-binding protein PstB 2 (269 aa).

The ABC transporter domain occupies 22–264 (LSTNDLRVFY…PSLQSTEDYV (243 aa)). 55–62 (GPSGSGKS) serves as a coordination point for ATP.

It belongs to the ABC transporter superfamily. Phosphate importer (TC 3.A.1.7) family. The complex is composed of two ATP-binding proteins (PstB), two transmembrane proteins (PstC and PstA) and a solute-binding protein (PstS).

It is found in the cell membrane. The enzyme catalyses phosphate(out) + ATP + H2O = ADP + 2 phosphate(in) + H(+). Functionally, part of the ABC transporter complex PstSACB involved in phosphate import. Responsible for energy coupling to the transport system. This Lactococcus lactis subsp. lactis (strain IL1403) (Streptococcus lactis) protein is Phosphate import ATP-binding protein PstB 2.